The primary structure comprises 206 residues: Recombination protein RecR (206 aa).

The C4-type zinc finger occupies 58 to 73 (CENCHNISDTKVCEIC). The region spanning 81–176 (QTICVVEDIR…IISTIARGIS (96 aa)) is the Toprim domain.

It belongs to the RecR family.

Its function is as follows. May play a role in DNA repair. It seems to be involved in an RecBC-independent recombinational process of DNA repair. It may act with RecF and RecO. The protein is Recombination protein RecR of Flavobacterium johnsoniae (strain ATCC 17061 / DSM 2064 / JCM 8514 / BCRC 14874 / CCUG 350202 / NBRC 14942 / NCIMB 11054 / UW101) (Cytophaga johnsonae).